The following is a 1006-amino-acid chain: Zinc finger protein ZFPM1 (1006 aa).

Basic residues predominate over residues 1–13; sequence MSRRKQSNPRQIK. 2 disordered regions span residues 1–93 and 114–133; these read MSRR…DELE and SWGP…RQAE. Over residues 15–25 the composition is skewed to basic and acidic residues; sequence SLGDMEAREEV. Residues 42-62 show a composition bias toward pro residues; the sequence is APSPPSADVNSPPPLPPPTSP. Residues 66–79 are compositionally biased toward basic and acidic residues; sequence KELEGQEPEPRPTE. S84 and S128 each carry phosphoserine. A compositionally biased stretch (polar residues) spans 121-130; the sequence is SVQTRASSPR. A CCHC FOG-type 1 zinc finger spans residues 235 to 268; that stretch reads VINKDVFPCKDCGIWYRSERNLQAHLLYYCASRQ. Zn(2+) contacts are provided by C243, C246, H259, and C264. S272 is subject to Phosphoserine. 3 consecutive C2H2-type zinc fingers follow at residues 290–314, 320–342, and 348–371; these read RVCP…MRSH, FVCL…LKVH, and GVCH…VTNH. Residues 330–341 form an interaction with TACC3 region; the sequence is TTKANCERHLKV. S384 is subject to Phosphoserine. Disordered stretches follow at residues 384–409, 438–460, and 473–515; these read SPGA…HTAL, NGEA…AAPR, and APIL…SPVP. A compositionally biased stretch (low complexity) spans 485–515; that stretch reads APSRTPSPRSPAPARVKAELSSPTPGSSPVP. S491 and S494 each carry phosphoserine. Residues 571–604 form a CCHC FOG-type 2 zinc finger; it reads PGAPKGATCFECEITFSNVNNYYVHKRLYCSGRR. Zn(2+) is bound by residues C579, C582, H595, and C600. A disordered region spans residues 605 to 681; sequence APEDAPAARR…SVDDAEDDPS (77 aa). The span at 617-629 shows a compositional bias: pro residues; it reads APPGPARAPPGQP. A phosphoserine mark is found at S638 and S671. A CCHC FOG-type 3 zinc finger spans residues 677–710; that stretch reads EDDPSRTLCEACNIRFSRHETYTVHKRYYCASRH. Zn(2+) contacts are provided by C685, C688, H701, and C706. The segment at 708–810 is disordered; that stretch reads SRHDPPPRRP…PRRPLPGAPA (103 aa). Pro residues-rich tracts occupy residues 715–735 and 754–769; these read RRPA…PSPA and APPP…PESP. Residues 780-791 are compositionally biased toward low complexity; the sequence is GLAPARSPGPAA. S786 carries the phosphoserine modification. The tract at residues 794 to 800 is interaction with CTBP2; the sequence is PIDLSKK. The CCHC FOG-type 4 zinc finger occupies 811–844; sequence PALADYHECTACRVSFHSLEAYLAHKKYSCPAAP. Zn(2+) contacts are provided by C819, C822, H835, and C840. Residues 854-877 form a C2H2-type 4 zinc finger; that stretch reads AACPYCPPNGPVRGDLLEHFRLAH. Residues 889 to 971 are disordered; it reads GVEARTPADR…KGTPAPLPNG (83 aa). A phosphoserine mark is found at S901, S909, S914, and S935. Over residues 925-950 the composition is skewed to pro residues; the sequence is PQEPPPGPPPSPAAAPEAVPPPPAPP. The CCHC FOG-type 5 zinc finger occupies 968–1001; the sequence is LPNGNHRYCRLCNIKFSSLSTFIAHKKYYCSSHA. Residues C976, C979, H992, and C997 each contribute to the Zn(2+) site.

The protein belongs to the FOG (Friend of GATA) family. Interacts with corepressor CTBP2; this interaction is however not essential for corepressor activity. Interacts with the N-terminal zinc-finger of GATA1, GATA2 and probably GATA3. In terms of tissue distribution, mainly expressed in hematopoietic tissues. Also expressed in adult cerebellum, stomach, lymph node, liver and pancreas. Expressed in fetal heart, liver and spleen.

The protein localises to the nucleus. In terms of biological role, transcription regulator that plays an essential role in erythroid and megakaryocytic cell differentiation. Essential cofactor that acts via the formation of a heterodimer with transcription factors of the GATA family GATA1, GATA2 and GATA3. Such heterodimer can both activate or repress transcriptional activity, depending on the cell and promoter context. The heterodimer formed with GATA proteins is essential to activate expression of genes such as NFE2, ITGA2B, alpha- and beta-globin, while it represses expression of KLF1. May be involved in regulation of some genes in gonads. May also be involved in cardiac development, in a non-redundant way with ZFPM2/FOG2. This Homo sapiens (Human) protein is Zinc finger protein ZFPM1 (ZFPM1).